Consider the following 261-residue polypeptide: Indole-3-glycerol phosphate synthase (261 aa).

This sequence belongs to the TrpC family.

The enzyme catalyses 1-(2-carboxyphenylamino)-1-deoxy-D-ribulose 5-phosphate + H(+) = (1S,2R)-1-C-(indol-3-yl)glycerol 3-phosphate + CO2 + H2O. Its pathway is amino-acid biosynthesis; L-tryptophan biosynthesis; L-tryptophan from chorismate: step 4/5. This is Indole-3-glycerol phosphate synthase from Campylobacter concisus (strain 13826).